The chain runs to 72 residues: Large ribosomal subunit protein bL31 (72 aa).

Positions 16, 18, 37, and 40 each coordinate Zn(2+).

The protein belongs to the bacterial ribosomal protein bL31 family. Type A subfamily. As to quaternary structure, part of the 50S ribosomal subunit. Zn(2+) is required as a cofactor.

Binds the 23S rRNA. The sequence is that of Large ribosomal subunit protein bL31 from Pseudomonas fluorescens (strain Pf0-1).